The following is an 804-amino-acid chain: uncharacterized protein (804 aa).

10 helical membrane passes run 15 to 35 (LLIVWLALSLAVACVLALGNI), 243 to 263 (FLLLSALLTLLLAVAAVAVAM), 301 to 321 (LSAVTGGAIGLLFENVLMVLL), 333 to 353 (SLWPWLWALGTMTVISLLVGL), 381 to 401 (FYLPIVSVVVVLLLAGLMGGS), 403 to 423 (LLWAVLAGAVVLALLCGVLGW), 453 to 473 (TLSQLSAFSLSFMLLALLLVL), 680 to 700 (ALEVMVVLVTACGMLLLLAQV), 734 to 754 (MLGFVSGLVAAIGAETALAVL), and 769 to 789 (LWIVLPCSGALLLSLFGGWLG).

Belongs to the ABC-4 integral membrane protein family.

It localises to the cell membrane. This is an uncharacterized protein from Escherichia coli (strain K12).